Reading from the N-terminus, the 666-residue chain is Endogenous retrovirus group K member 7 Gag polyprotein (666 aa).

Gly-2 is lipidated: N-myristoyl glycine. Disordered stretches follow at residues 165 to 205 (GKGP…NKTQ) and 217 to 264 (ELQY…GSEL). Pro residues predominate over residues 232-247 (GMPPAPQGRAPYPQPP). CCHC-type zinc fingers lie at residues 544-561 (GKCY…NCPV) and 580-597 (DLCP…QCRS). Residues 598 to 641 (KFDKNGQPLSGNEQRGQPQAPQQTGAFPIQPFVPQGFQEQQPPL) form a disordered region. Polar residues predominate over residues 604 to 622 (QPLSGNEQRGQPQAPQQTG).

Belongs to the beta type-B retroviral Gag protein family. HERV class-II K(HML-2) gag subfamily. Post-translationally, specific enzymatic cleavages may yield mature proteins. Myristoylation is essential for retroviral assembly. Alteration of the glycine residue leads to a block in the budding of particles and an accumulation of Gag inside the cell.

It is found in the cell membrane. The products of the Gag polyproteins of infectious retroviruses perform highly complex orchestrated tasks during the assembly, budding, maturation, and infection stages of the viral replication cycle. During viral assembly, the proteins form membrane associations and self-associations that ultimately result in budding of an immature virion from the infected cell. Gag precursors also function during viral assembly to selectively bind and package two plus strands of genomic RNA. Endogenous Gag proteins may have kept, lost or modified their original function during evolution. In Homo sapiens (Human), this protein is Endogenous retrovirus group K member 7 Gag polyprotein (ERVK-7).